Consider the following 468-residue polypeptide: Argininosuccinate lyase (468 aa).

The protein belongs to the lyase 1 family. Argininosuccinate lyase subfamily.

The protein resides in the cytoplasm. The enzyme catalyses 2-(N(omega)-L-arginino)succinate = fumarate + L-arginine. Its pathway is amino-acid biosynthesis; L-arginine biosynthesis; L-arginine from L-ornithine and carbamoyl phosphate: step 3/3. In Paraburkholderia phymatum (strain DSM 17167 / CIP 108236 / LMG 21445 / STM815) (Burkholderia phymatum), this protein is Argininosuccinate lyase.